The following is a 161-amino-acid chain: Phosphopantetheine adenylyltransferase (161 aa).

Residue Ser-8 participates in substrate binding. Residues 8–9 and His-16 each bind ATP; that span reads SF. Substrate contacts are provided by residues 36–40, Leu-72, and Arg-86; that span reads ENPRK. ATP-binding positions include 87-89, Glu-97, and 122-128; these read GLR and FSFISSS. Substrate is bound at residue Glu-132.

This sequence belongs to the bacterial CoaD family. As to quaternary structure, homohexamer. Requires Mg(2+) as cofactor.

It is found in the cytoplasm. The catalysed reaction is (R)-4'-phosphopantetheine + ATP + H(+) = 3'-dephospho-CoA + diphosphate. It participates in cofactor biosynthesis; coenzyme A biosynthesis; CoA from (R)-pantothenate: step 4/5. Reversibly transfers an adenylyl group from ATP to 4'-phosphopantetheine, yielding dephospho-CoA (dPCoA) and pyrophosphate. This is Phosphopantetheine adenylyltransferase from Thermotoga maritima (strain ATCC 43589 / DSM 3109 / JCM 10099 / NBRC 100826 / MSB8).